A 235-amino-acid chain; its full sequence is Exosome complex component RRP46 (235 aa).

Residues Met-1–Ala-13 are compositionally biased toward basic and acidic residues. The tract at residues Met-1–Pro-24 is disordered. Position 20 is a phosphoserine (Ser-20).

This sequence belongs to the RNase PH family. In terms of assembly, homodimer. Component of the RNA exosome core complex (Exo-9), composed of EXOSC1, EXOSC2, EXOSC3, EXOSC4, EXOSC5, EXOSC6, EXOSC7, EXOSC8 and EXOSC9; within the complex interacts with EXOSC3, EXOSC8, and EXOSC9. The catalytically inactive RNA exosome core complex (Exo-9) associates with the catalytic subunit EXOSC10/RRP6. Exo-9 may associate with DIS3 to form the nucleolar exosome complex, or DIS3L to form the cytoplasmic exosome complex. Exo-9 is formed by a hexameric base ring consisting of the heterodimers EXOSC4-EXOSC9, EXOSC5-EXOSC8 and EXOSC6-EXOSC7, and a cap ring consisting of EXOSC1, EXOSC2 and EXOSC3. The RNA exosome complex associates with cofactors C1D/RRP47, MPHOSPH6/MPP6 and MTREX/MTR4. Interacts with GTPBP1. Interacts with ZC3HAV1. Interacts with DDX17 only in the presence of ZC3HAV1 in an RNA-independent manner. As to expression, highly expressed in a variety of hematopoietic and epithelial tumor cell lines, but not in normal hematopoietic tissues or other normal tissue, with the exception of testis.

It localises to the nucleus. It is found in the nucleolus. The protein localises to the cytoplasm. Non-catalytic component of the RNA exosome complex which has 3'-&gt;5' exoribonuclease activity and participates in a multitude of cellular RNA processing and degradation events. In the nucleus, the RNA exosome complex is involved in proper maturation of stable RNA species such as rRNA, snRNA and snoRNA, in the elimination of RNA processing by-products and non-coding 'pervasive' transcripts, such as antisense RNA species and promoter-upstream transcripts (PROMPTs), and of mRNAs with processing defects, thereby limiting or excluding their export to the cytoplasm. The RNA exosome may be involved in Ig class switch recombination (CSR) and/or Ig variable region somatic hypermutation (SHM) by targeting AICDA deamination activity to transcribed dsDNA substrates. In the cytoplasm, the RNA exosome complex is involved in general mRNA turnover and specifically degrades inherently unstable mRNAs containing AU-rich elements (AREs) within their 3' untranslated regions, and in RNA surveillance pathways, preventing translation of aberrant mRNAs. It seems to be involved in degradation of histone mRNA. The catalytic inactive RNA exosome core complex of 9 subunits (Exo-9) is proposed to play a pivotal role in the binding and presentation of RNA for ribonucleolysis, and to serve as a scaffold for the association with catalytic subunits and accessory proteins or complexes. In vitro, EXOSC5 does not bind or digest single-stranded RNA and binds to double-stranded DNA without detectable DNase activity. The chain is Exosome complex component RRP46 (EXOSC5) from Homo sapiens (Human).